Here is a 228-residue protein sequence, read N- to C-terminus: Thermonuclease (228 aa).

The first 23 residues, Met1–Ala23, serve as a signal peptide directing secretion. Residues Ile24–Ala60 constitute a propeptide that is removed on maturation. A compositionally biased stretch (polar residues) spans Ala58 to Ser70. The tract at residues Ala58–Thr83 is disordered. Ca(2+) is bound at residue Asp100. Residue Arg114 is part of the active site. Positions 119 and 120 each coordinate Ca(2+). Residues Glu122 and Arg166 contribute to the active site.

It belongs to the thermonuclease family. Requires Ca(2+) as cofactor.

Its subcellular location is the secreted. The enzyme catalyses Endonucleolytic cleavage to nucleoside 3'-phosphates and 3'-phosphooligonucleotide end-products.. Its function is as follows. Enzyme that catalyzes the hydrolysis of both DNA and RNA at the 5' position of the phosphodiester bond. This chain is Thermonuclease (nuc), found in Staphylococcus aureus (strain COL).